Consider the following 336-residue polypeptide: MLYRLARTGFFQLDAEKAHDLAIKNFQRFNGTPLDLFYRQQLPNRPVECMGLTFRNPVGLAAGLDKNGECIEAFDAMGFGFVEVGTVTPRPQPGNDKPRLFRLVEAEGIINRMGFNNLGVDHLVENVKKAKFNCVLGINIGKNKDTPIENGAEDYLICMEKVYEYAGYIAVNISSPNTPGLRSLQYGEALDELLSELKAKQSELAEKHGKYVPLALKIAPDLSDDEITQICESLLKNNIDGVIATNTTLDRTVVEGMKHANEAGGLSGRPVQSRSTEVVRKLHEALGDKLPIIGVGGIDSYVAAKEKMMAGAQLVQVYTGFIYHGPGLVRDIVKNL.

FMN contacts are provided by residues 62–66 (AGLDK) and Thr-86. Lys-66 contributes to the substrate binding site. 111–115 (NRMGF) serves as a coordination point for substrate. The FMN site is built by Asn-139 and Asn-172. Asn-172 lines the substrate pocket. Residue Ser-175 is the Nucleophile of the active site. Asn-177 provides a ligand contact to substrate. FMN is bound by residues Lys-217 and Thr-245. 246 to 247 (NT) lines the substrate pocket. FMN is bound by residues Gly-268, Gly-297, and 318–319 (YT).

This sequence belongs to the dihydroorotate dehydrogenase family. Type 2 subfamily. Monomer. FMN is required as a cofactor.

It localises to the cell membrane. It carries out the reaction (S)-dihydroorotate + a quinone = orotate + a quinol. It functions in the pathway pyrimidine metabolism; UMP biosynthesis via de novo pathway; orotate from (S)-dihydroorotate (quinone route): step 1/1. Catalyzes the conversion of dihydroorotate to orotate with quinone as electron acceptor. This Vibrio parahaemolyticus serotype O3:K6 (strain RIMD 2210633) protein is Dihydroorotate dehydrogenase (quinone).